A 1204-amino-acid polypeptide reads, in one-letter code: Exportin-5 (1204 aa).

The segment at 1 to 108 (MEMEQVNALC…ANGTLRILEE (108 aa)) is necessary for interaction with Ran. Lys-396 carries the post-translational modification N6-acetyllysine. The tract at residues 533–640 (ELLQLVLNFE…KQLLSNELLL (108 aa)) is necessary for interaction with ILF3. A pre-siRNA binding region spans residues 641–642 (TQ).

Belongs to the exportin family. Component of a nuclear export receptor complex composed of XPO5, RAN, dsRNA-binding proteins and dsRNA. Found in a nuclear export complex with XPO5, RAN, EEF1A1, and aminoacylated tRNA. Found in a nuclear export complex with XPO5, RAN, ILF3 and dsRNA. Found in a nuclear export complex with XPO5, RAN and pre-miRNA. Found in a nuclear export complex with XPO5, RAN, ILF3 and minihelix VA1 dsRNA. Found in a nuclear export complex with XPO5, RAN, ILF3, ZNF346 and dsRNA. Interacts with EEF1A1, ILF3, NUP153, NUP214 and ZNF346. Interacts with RAN and cargo proteins in a GTP-dependent manner. Interacts with ADAR/ADAR1 (via DRBM domains). Interacts with SMAD4; mediates nuclear export of SMAD4. Interacts with RAN (GTP-bound form).

It localises to the nucleus. It is found in the cytoplasm. Its function is as follows. Mediates the nuclear export of proteins bearing a double-stranded RNA binding domain (dsRBD) and double-stranded RNAs (cargos). XPO5 in the nucleus binds cooperatively to the RNA and to the GTPase Ran in its active GTP-bound form. Proteins containing dsRBDs can associate with this trimeric complex through the RNA. Docking of this complex to the nuclear pore complex (NPC) is mediated through binding to nucleoporins. Upon transit of a nuclear export complex into the cytoplasm, hydrolysis of Ran-GTP to Ran-GDP (induced by RANBP1 and RANGAP1, respectively) cause disassembly of the complex and release of the cargo from the export receptor. XPO5 then returns to the nuclear compartment by diffusion through the nuclear pore complex, to mediate another round of transport. The directionality of nuclear export is thought to be conferred by an asymmetric distribution of the GTP- and GDP-bound forms of Ran between the cytoplasm and nucleus. Overexpression may in some circumstances enhance RNA-mediated gene silencing (RNAi). Mediates nuclear export of ADAR/ADAR1 in a RanGTP-dependent manner. Mediates the nuclear export of micro-RNA precursors, which form short hairpins. Also mediates the nuclear export of synthetic short hairpin RNAs used for RNA interference. In some circumstances can also mediate the nuclear export of deacylated and aminoacylated tRNAs. Specifically recognizes dsRNAs that lack a 5'-overhang in a sequence-independent manner, have only a short 3'-overhang, and that have a double-stranded length of at least 15 base-pairs. Binding is dependent on Ran-GTP. The sequence is that of Exportin-5 (Xpo5) from Mus musculus (Mouse).